We begin with the raw amino-acid sequence, 320 residues long: Foldase protein PrsA (320 aa).

Residues 1–20 form the signal peptide; that stretch reads MKMINKLIVPVTASALLLGA. A lipid anchor (N-palmitoyl cysteine) is attached at Cys21. Cys21 carries S-diacylglycerol cysteine lipidation. The region spanning 139–245 is the PpiC domain; it reads EDSKKASHIL…FGYHIIKADK (107 aa). The disordered stretch occupies residues 159–198; sequence EGLDDKEAKQKAEEIQKEVSKDPSKFGEIAKKESMDTGSA.

Belongs to the PrsA family.

The protein resides in the cell membrane. The enzyme catalyses [protein]-peptidylproline (omega=180) = [protein]-peptidylproline (omega=0). Its function is as follows. Plays a major role in protein secretion by helping the post-translocational extracellular folding of several secreted proteins. The protein is Foldase protein PrsA of Staphylococcus aureus (strain MRSA252).